The primary structure comprises 539 residues: 3-methylmercaptopropionyl-CoA ligase (539 aa).

Position 185 (threonine 185) interacts with Mg(2+). 5 residues coordinate ATP: histidine 231, glycine 303, histidine 324, alanine 325, and serine 329. Residue glutamate 330 participates in Mg(2+) binding. Residues glutamine 359, aspartate 417, arginine 432, and lysine 523 each contribute to the ATP site.

This sequence belongs to the ATP-dependent AMP-binding enzyme family. In terms of assembly, homodimer. It depends on Mg(2+) as a cofactor.

The enzyme catalyses 3-(methylsulfanyl)propanoate + ATP + CoA = 3-(methylsulfanyl)propanoyl-CoA + AMP + diphosphate. With respect to regulation, ADP acts as a competitive inhibitor and inhibits the ligase activity. In terms of biological role, involved in the assimilation of dimethylsulphoniopropionate (DMSP), an important compound in the fixation of carbon in marine phytoplankton. Catalyzes the ATP-dependent ligation of methylmercaptopropionate (MMPA) and CoA to yield methylmercaptopropionate-CoA (MMPA-CoA). The protein is 3-methylmercaptopropionyl-CoA ligase of Ruegeria lacuscaerulensis (strain DSM 11314 / KCTC 2953 / ITI-1157) (Silicibacter lacuscaerulensis).